Consider the following 245-residue polypeptide: MIIPALDLIEGKVVRLHQGDYGQQRDYGNHPLPRLQDYQQQGAQVLHLVDLTGAKDPAARQIPLLRELLAGVDVPVQVGGGIRNEQDVVALLEAGAARVVVGSTAVKQPEMVQQWFERYGAEAIVLALDVRINEAGCKHVAISGWQENSDATLEQIVEQYLPYGLKHVLCTDISRDGTLSGSNVELYQEVCQRYPQVAFQASGGIGCLDDIARLRGSGVQGVIVGRALLDGKFNVKEAIACWQNV.

The Proton acceptor role is filled by Asp7. Asp129 functions as the Proton donor in the catalytic mechanism.

It belongs to the HisA/HisF family.

The protein localises to the cytoplasm. It carries out the reaction 1-(5-phospho-beta-D-ribosyl)-5-[(5-phospho-beta-D-ribosylamino)methylideneamino]imidazole-4-carboxamide = 5-[(5-phospho-1-deoxy-D-ribulos-1-ylimino)methylamino]-1-(5-phospho-beta-D-ribosyl)imidazole-4-carboxamide. It functions in the pathway amino-acid biosynthesis; L-histidine biosynthesis; L-histidine from 5-phospho-alpha-D-ribose 1-diphosphate: step 4/9. The chain is 1-(5-phosphoribosyl)-5-[(5-phosphoribosylamino)methylideneamino] imidazole-4-carboxamide isomerase from Yersinia pestis bv. Antiqua (strain Antiqua).